The chain runs to 726 residues: MSTTDDTHNTLSTGKCPFHQGGHDRSAGAGTASRDWWPNQLRVDLLNQHSNRSNPLGEDFDYRKEFSKLDYSALKGDLKALLTDSQPWWPADWGSYVGLFIRMAWHGAGTYRSIDGRGGAGRGQQRFAPLNSWPDNVSLDKARRLLWPIKQKYGQKISWADLFILAGNVALENSGFRTFGFGAGREDVWEPDLDVNWGDEKAWLTHRHPEALAKAPLGATEMGLIYVNPEGPDHSGEPLSAAAAIRATFGNMGMNDEETVALIAGGHTLGKTHGAAAASHVGADPEAAPIEAQGLGWASSYGSGVGADAITSGLEVVWTQTPTQWSNYFFENLFKYEWVQTRSPAGAIQFEAVDAPDIIPDPFDPSKKRKPTMLVTDLTLRFDPEFEKISRRFLNDPQAFNEAFARAWFKLTHRDMGPKARYIGPEVPKEDLIWQDPLPQPLYQPTQEDIINLKAAIAASGLSISEMVSVAWASASTFRGGDKRGGANGARLALAPQRDWEVNAVAARVLPVLEALQKTTNKASLADIIVLAGVVGIEQAAAAAGVSISVPFAPGRVDARQDQTDIEMFSLLEPIADGFRNYRARLDVSTTESLLIDKAQQLTLTAPEMTVLVGGMRVLGTNFDGSQNGVFTDRPGVLSTDFFANLLDMRYEWKPTDDANELFEGRDRLTGEVKYTATRADLVFGSNSVLRALAEVYACSDAHEKFVKDFVAAWVKVMNLDRFDLL.

Positions 1-33 (MSTTDDTHNTLSTGKCPFHQGGHDRSAGAGTAS) are disordered. Residues 105–226 (WHGAGTYRSI…LGATEMGLIY (122 aa)) constitute a cross-link (tryptophyl-tyrosyl-methioninium (Trp-Tyr) (with M-252)). His106 acts as the Proton acceptor in catalysis. Positions 226-252 (YVNPEGPDHSGEPLSAAAAIRATFGNM) form a cross-link, tryptophyl-tyrosyl-methioninium (Tyr-Met) (with W-105). A heme b-binding site is contributed by His267.

This sequence belongs to the peroxidase family. Peroxidase/catalase subfamily. In terms of assembly, homodimer or homotetramer. It depends on heme b as a cofactor. In terms of processing, formation of the three residue Trp-Tyr-Met cross-link is important for the catalase, but not the peroxidase activity of the enzyme.

The enzyme catalyses H2O2 + AH2 = A + 2 H2O. The catalysed reaction is 2 H2O2 = O2 + 2 H2O. Functionally, bifunctional enzyme with both catalase and broad-spectrum peroxidase activity. The protein is Catalase-peroxidase of Salmonella typhi.